The chain runs to 677 residues: Bargin (677 aa).

Low complexity-rich tracts occupy residues 1–13 (MDRGLPGPATPAV) and 29–39 (APHAAAGPDGQ). Disordered regions lie at residues 1–39 (MDRGLPGPATPAVTPQPPARPQDDEEAAAPHAAAGPDGQ) and 168–190 (SQATKNSGSSQGLGGSPGSHSHT). One can recognise a BAR domain in the interval 25–270 (EEAAAPHAAA…RENHGQADHS (246 aa)). 3 positions are modified to phosphoserine: Ser-183, Ser-270, and Ser-272. Residues 284-477 (VSLATHLQEL…ALIQSADTLF (194 aa)) form the Rho-GAP domain. The segment at 504–577 (SEELPSTAVP…DMARRSTGSL (74 aa)) is disordered. Over residues 516–530 (ATTPAPAPAPAPAPA) the composition is skewed to pro residues. Phosphoserine occurs at positions 552 and 558. The interval 574–677 (TGSLAAAVET…IADLTEGLED (104 aa)) is mediates non-covalent binding of poly-ubiquitin chains.

In terms of tissue distribution, expressed in brain (at protein level).

Its subcellular location is the cell membrane. It is found in the cytoplasm. It localises to the cytosol. Functionally, GTPase activating protein (GAP) which specifically converts GTP-bound RAC1 and CDC42 in their inactive GDP-bound form. The GAP activity is enhanced by the non-covalent binding of K-29 and K-48 polyubiquitin chains. The protein is Bargin of Homo sapiens (Human).